Here is a 469-residue protein sequence, read N- to C-terminus: Calcium-binding mitochondrial carrier protein SCaMC-2-B (469 aa).

Topologically, residues 1–189 (MLCLCLYVPV…EKNTGMWWRH (189 aa)) are mitochondrial intermembrane. 3 consecutive EF-hand domains span residues 47–80 (SYRKWRKKVVKAGDKDLDGQLDFEEFVHYLRDHE), 78–113 (DHEKKLRLVFKSLDKKNDGHIDSQEIMQSLRDLGVH), and 114–149 (ISEEQAEKILKSMDKNGTMTIDWNEWRDYHLLHPAE). Asp-60, Asp-62, Asp-64, Gln-66, and Glu-71 together coordinate Ca(2+). Solcar repeat units follow at residues 184-270 (GMWW…IKRL), 278-363 (LGIL…LKNS), and 375-463 (PGVF…LKIT). A helical transmembrane segment spans residues 190–207 (LVAGGGAGAVSRTCTAPL). At 208–244 (DRLKVLMQVHATRSNSMGIAGGFTQMIREGGLRSLWR) the chain is on the mitochondrial matrix side. The helical transmembrane segment at 245–264 (GNGINVLKIAPESAIKFMAY) threads the bilayer. Residues 265–287 (EQIKRLIGSNQETLGILERLVSG) are Mitochondrial intermembrane-facing. A helical membrane pass occupies residues 288-301 (SLAGAIAQSSIYPM). Topologically, residues 302-337 (EVLKTRLALGRTGQYSGIADCAKHIFKKEGMTAFYK) are mitochondrial matrix. A helical transmembrane segment spans residues 338–357 (GYIPNMLGIIPYAGIDLAVY). Topologically, residues 358-380 (ETLKNSWLQRFATDSADPGVFVL) are mitochondrial intermembrane. Residues 381 to 398 (LACGTMSSTCGQLASYPL) traverse the membrane as a helical segment. Residues 399-437 (ALVRTRMQAQASQEGSPQMTMSGLFRHIVRTEGAIGLYR) are Mitochondrial matrix-facing. Residues 438–457 (GLAPNFMKVIPAVSISYVVY) traverse the membrane as a helical segment. Over 458–469 (ENLKITLGVQSR) the chain is Mitochondrial intermembrane.

This sequence belongs to the mitochondrial carrier (TC 2.A.29) family.

Its subcellular location is the mitochondrion inner membrane. Functionally, calcium-dependent mitochondrial solute carrier. The chain is Calcium-binding mitochondrial carrier protein SCaMC-2-B (slc25a25b) from Danio rerio (Zebrafish).